The sequence spans 70 residues: Cold shock-like protein CspG (70 aa).

The region spanning 7 to 67 (GLVKWFNADK…GQRGPAAANV (61 aa)) is the CSD domain.

It is found in the cytoplasm. This is Cold shock-like protein CspG (cspG) from Escherichia coli O157:H7.